We begin with the raw amino-acid sequence, 563 residues long: Methylcrotonoyl-CoA carboxylase beta chain, mitochondrial (563 aa).

Residues 1–22 (MWGALRSALRPCCRAAVPPQRA) constitute a mitochondrion transit peptide. Positions 49 to 306 (MKALVSQLHE…QKKMDVTIEP (258 aa)) constitute a CoA carboxyltransferase N-terminal domain. Positions 49-555 (MKALVSQLHE…SAALNAPIQR (507 aa)) are carboxyltransferase. Residue lysine 70 is modified to N6-acetyllysine; alternate. Lysine 70 bears the N6-succinyllysine; alternate mark. Lysine 141 is modified (N6-succinyllysine). The region spanning 309–555 (EPLFPADELY…SAALNAPIQR (247 aa)) is the CoA carboxyltransferase C-terminal domain. The tract at residues 343–372 (RFNEFKALYGDTLVTGFARIFGYPVGIIGN) is acyl-CoA binding. An N6-succinyllysine modification is found at lysine 433. Lysine 495 is modified (N6-acetyllysine; alternate). Lysine 495 carries the N6-succinyllysine; alternate modification. N6-acetyllysine is present on lysine 511.

The protein belongs to the AccD/PCCB family. As to quaternary structure, probably a dodecamer composed of six biotin-containing alpha subunits (MCCC1) and six beta (MCCC2) subunits.

It localises to the mitochondrion matrix. The catalysed reaction is 3-methylbut-2-enoyl-CoA + hydrogencarbonate + ATP = 3-methyl-(2E)-glutaconyl-CoA + ADP + phosphate + H(+). It functions in the pathway amino-acid degradation; L-leucine degradation; (S)-3-hydroxy-3-methylglutaryl-CoA from 3-isovaleryl-CoA: step 2/3. Functionally, carboxyltransferase subunit of the 3-methylcrotonyl-CoA carboxylase, an enzyme that catalyzes the conversion of 3-methylcrotonyl-CoA to 3-methylglutaconyl-CoA, a critical step for leucine and isovaleric acid catabolism. The chain is Methylcrotonoyl-CoA carboxylase beta chain, mitochondrial (Mccc2) from Mus musculus (Mouse).